The chain runs to 160 residues: Nucleotide-binding protein Noc_2254 (160 aa).

Belongs to the YajQ family.

Functionally, nucleotide-binding protein. This chain is Nucleotide-binding protein Noc_2254, found in Nitrosococcus oceani (strain ATCC 19707 / BCRC 17464 / JCM 30415 / NCIMB 11848 / C-107).